The following is a 31-amino-acid chain: MGINTRELFLNFTIVLITVILMWLLVRSYQY.

The Cytoplasmic portion of the chain corresponds to 1–7; the sequence is MGINTRE. The chain crosses the membrane as a helical span at residues 8 to 26; it reads LFLNFTIVLITVILMWLLV. Over 27 to 31 the chain is Lumenal; the sequence is RSYQY.

The protein belongs to the sarcolipin family. In terms of assembly, homooligomer. Can also form heterooligomers with other sarcoplasmic/endoplasmic reticulum calcium ATPase (SERCA) regulators ARLN, ERLN, PLN and STRIT1/DWORF. Monomer. Interacts with calcium ATPase ATP2A1/SERCA1. Interacts as a monomer with ATP2A2/SERCA2; the interaction decreases ATP2A2 Ca(2+) affinity. Interacts with VMP1; VMP1 competes with PLN and SLN to prevent them from forming an inhibitory complex with ATP2A2.

It is found in the sarcoplasmic reticulum membrane. Its subcellular location is the endoplasmic reticulum membrane. Its function is as follows. Reversibly inhibits the activity of ATP2A1/SERCA1 and ATP2A2/SERCA2 in sarcoplasmic reticulum by decreasing the apparent affinity of the ATPase for Ca(2+). Also inhibits the activity of ATP2A3/SERCA3. Modulates calcium re-uptake during muscle relaxation and plays an important role in calcium homeostasis in muscle. Required for muscle-based, non-shivering thermogenesis. This chain is Sarcolipin, found in Homo sapiens (Human).